The primary structure comprises 172 residues: uncharacterized protein (172 aa).

This is an uncharacterized protein from Homo sapiens (Human).